Consider the following 427-residue polypeptide: Glutamate-1-semialdehyde 2,1-aminomutase (427 aa).

Lysine 265 carries the N6-(pyridoxal phosphate)lysine modification.

The protein belongs to the class-III pyridoxal-phosphate-dependent aminotransferase family. HemL subfamily. In terms of assembly, homodimer. Pyridoxal 5'-phosphate is required as a cofactor.

The protein localises to the cytoplasm. It catalyses the reaction (S)-4-amino-5-oxopentanoate = 5-aminolevulinate. It participates in porphyrin-containing compound metabolism; protoporphyrin-IX biosynthesis; 5-aminolevulinate from L-glutamyl-tRNA(Glu): step 2/2. The protein is Glutamate-1-semialdehyde 2,1-aminomutase of Burkholderia cenocepacia (strain HI2424).